A 741-amino-acid chain; its full sequence is Mitofusin-1 (741 aa).

At 1 to 584 the chain is on the cytoplasmic side; the sequence is MAEPVSPLKH…ASQEELMITL (584 aa). Positions 9 to 73 are part of a helix bundle domain, formed by helices from N-terminal and C-terminal regions; sequence KHFVLAKKAI…LSIIGEVLSR (65 aa). The Dynamin-type G domain maps to 72-321; it reads SRRHMKVAFF…ARLQEFQNFE (250 aa). The G1 motif stretch occupies residues 82-89; that stretch reads GRTSSGKS. 85-90 is a GTP binding site; it reads SSGKSS. The segment at 108–109 is G2 motif; sequence IT. Residues 178–181 are G3 motif; sequence DSPG. Position 237 to 240 (237 to 240) interacts with GTP; sequence NRWD. Residues 237 to 240 are G4 motif; sequence NRWD. Position 266 (glutamate 266) is a region of interest, G5 motif. Residues serine 284 and lysine 286 each contribute to the GTP site. The interval 338-364 is part of a helix bundle domain, formed by helices from N-terminal and C-terminal regions; it reads EQHTIRAKQILATVKNIMDSVNLAAED. A coiled-coil region spans residues 371 to 408; the sequence is EEREDQIDRLDFIRNQMNLLTLDVKKKIKEVTEEVANK. The helical transmembrane segment at 585–605 threads the bilayer; the sequence is VTGLASVTSRTSMGIIIVGGV. The Mitochondrial intermembrane segment spans residues 606–608; the sequence is IWK. A helical membrane pass occupies residues 609-629; the sequence is TIGWKLLSVSLTMYGALYLYE. The Cytoplasmic portion of the chain corresponds to 630-741; the sequence is RLSWTTHAKE…QFLPSSNEES (112 aa). Residues 679 to 734 are a coiled coil; sequence RLCQQVDITQKQLEEEIARLPKEIDQLEKIQNNSKLLRNKAVQLENELENFTKQFL. The tract at residues 703 to 734 is part of a helix bundle domain, formed by helices from N-terminal and C-terminal regions; that stretch reads DQLEKIQNNSKLLRNKAVQLENELENFTKQFL.

The protein belongs to the TRAFAC class dynamin-like GTPase superfamily. Dynamin/Fzo/YdjA family. Mitofusin subfamily. In terms of assembly, homodimer, also in the absence of bound GTP. Forms higher oligomers in the presence of a transition state GTP analog. Forms homomultimers and heteromultimers with MFN2. Oligomerization is essential for mitochondrion fusion. Component of a high molecular weight multiprotein complex. Interacts with VAT1. Interacts with THG1L; THG1L probably functions as a guanyl-nucleotide exchange factor/GEF, activating MFN1. Ubiquitinated by non-degradative ubiquitin by PRKN. Deubiquitination by USP30 inhibits mitochondrial fusion. Ubiquitinated by MARCHF5. When mitochondria are depolarized and dysfunctional, it is ubiquitinated by a SCF (SKP1-CUL1-F-box protein) E3 ubiquitin-protein ligase complex that contains FBXO7 and PRKN. In terms of tissue distribution, detected in kidney and heart (at protein level). Ubiquitous. Expressed at slightly higher level in kidney and heart. Isoform 2 may be overexpressed in some tumors, such as lung cancers.

The protein resides in the mitochondrion outer membrane. It localises to the cytoplasm. It carries out the reaction GTP + H2O = GDP + phosphate + H(+). In terms of biological role, mitochondrial outer membrane GTPase that mediates mitochondrial clustering and fusion. Membrane clustering requires GTPase activity. It may involve a major rearrangement of the coiled coil domains. Mitochondria are highly dynamic organelles, and their morphology is determined by the equilibrium between mitochondrial fusion and fission events. Overexpression induces the formation of mitochondrial networks (in vitro). Has low GTPase activity. This is Mitofusin-1 (MFN1) from Homo sapiens (Human).